Here is a 1809-residue protein sequence, read N- to C-terminus: Stereocilin (1809 aa).

The signal sequence occupies residues 1–22 (MALSLQPQLLLLLSLLPQEVTS). N63, N200, N295, N352, and N364 each carry an N-linked (GlcNAc...) asparagine glycan. The disordered stretch occupies residues 376-426 (PATPRPPPTTPRPPPTTPQPPPTTTQPIPDTTQPPPVTPRPPPTTPQPPPS). Composition is skewed to pro residues over residues 378 to 399 (TPRP…PPTT) and 407 to 426 (TQPP…PPPS). N467, N516, N580, N605, N696, N860, N952, N1000, N1213, and N1308 each carry an N-linked (GlcNAc...) asparagine glycan.

Belongs to the stereocilin family. In terms of tissue distribution, strongly expressed in the inner ear, detected in the testis, and barely detected in the eye. Detected in the six sensory areas of the inner ear by immunofluorescence. Expressed only in the sensory hair cells and associated with the stereocilia, the stiff microvilli forming the structure for mechanoreception of sound stimulation.

It is found in the cell surface. It localises to the cell projection. The protein resides in the kinocilium. Its subcellular location is the stereocilium. Its function is as follows. Essential to the formation of horizontal top connectors between outer hair cell stereocilia. The polypeptide is Stereocilin (Strc) (Mus musculus (Mouse)).